The following is a 642-amino-acid chain: Forkhead box protein K2 (642 aa).

The FHA domain occupies Val-30–Gln-91. The segment at Gln-201 to Pro-221 is disordered. Residues Glu-203 to Lys-219 are compositionally biased toward basic and acidic residues. Positions Lys-219–Arg-314 form a DNA-binding region, fork-head. The DNA-binding; major groove stretch occupies residues Lys-261 to Lys-279. Mg(2+) contacts are provided by Leu-271, Ser-272, Asn-274, and Phe-277. 2 DNA-binding; minor groove regions span residues Lys-289–Trp-293 and Arg-309–Arg-314. Disordered stretches follow at residues Leu-323–Ser-359 and Ala-589–Glu-615. 2 stretches are compositionally biased toward polar residues: residues Ser-327–Ser-353 and Ala-589–Gln-605. Positions Pro-606–Glu-615 are enriched in basic and acidic residues.

In neurula embryos, expressed strongly in the future floor plate and weakly in the neural crest progenitor cells. As development progresses, expression becomes stronger in neural crest cells. At stage 24, expressed in the eye, brain, branchial arches and in the presomitic mesoderm in the posterior embryo. At stage 29, additionally expressed in the pronephric tubules. At stage 35, expressed in the migrating lateral muscle precursors of the abdomen. Additionally, the developing proctodeum and head structures including the branchial arches, eyes and otic vesicles continue to show expression. Expression also persists in the nephros.

Its subcellular location is the nucleus. It is found in the cytoplasm. Its function is as follows. Transcriptional regulator involved in different processes such as glucose metabolism, aerobic glycolysis and autophagy. Recognizes and binds the forkhead DNA sequence motif (5'-GTAAACA-3') and can both act as a transcription activator or repressor, depending on the context. Acts as a key regulator of metabolic reprogramming towards aerobic glycolysis, a process in which glucose is converted to lactate in the presence of oxygen. Acts as a negative regulator of autophagy in skeletal muscle: in response to starvation, enters the nucleus, binds the promoters of autophagy genes and represses their expression, preventing proteolysis of skeletal muscle proteins. The sequence is that of Forkhead box protein K2 from Xenopus laevis (African clawed frog).